We begin with the raw amino-acid sequence, 149 residues long: Large ribosomal subunit protein bL9 (149 aa).

Belongs to the bacterial ribosomal protein bL9 family.

In terms of biological role, binds to the 23S rRNA. This Geobacillus stearothermophilus (Bacillus stearothermophilus) protein is Large ribosomal subunit protein bL9 (rplI).